A 203-amino-acid polypeptide reads, in one-letter code: dTTP/UTP pyrophosphatase (203 aa).

Asp-70 (proton acceptor) is an active-site residue.

The protein belongs to the Maf family. YhdE subfamily. A divalent metal cation is required as a cofactor.

It localises to the cytoplasm. It carries out the reaction dTTP + H2O = dTMP + diphosphate + H(+). The enzyme catalyses UTP + H2O = UMP + diphosphate + H(+). Functionally, nucleoside triphosphate pyrophosphatase that hydrolyzes dTTP and UTP. May have a dual role in cell division arrest and in preventing the incorporation of modified nucleotides into cellular nucleic acids. This Pseudomonas putida (strain ATCC 47054 / DSM 6125 / CFBP 8728 / NCIMB 11950 / KT2440) protein is dTTP/UTP pyrophosphatase (maf-1).